A 95-amino-acid polypeptide reads, in one-letter code: Protein TusB (95 aa).

It belongs to the DsrH/TusB family. As to quaternary structure, heterohexamer, formed by a dimer of trimers. The hexameric TusBCD complex contains 2 copies each of TusB, TusC and TusD. The TusBCD complex interacts with TusE.

It localises to the cytoplasm. In terms of biological role, part of a sulfur-relay system required for 2-thiolation of 5-methylaminomethyl-2-thiouridine (mnm(5)s(2)U) at tRNA wobble positions. The chain is Protein TusB from Salmonella agona (strain SL483).